Reading from the N-terminus, the 430-residue chain is MLDPNLLRNELDAVAEKLARRGYKLDVDTLRQQEERRKVLQVETESLQAERNSRSKSIGAAKARGEDIEPLRREVNELGEKLDAAKAELDRLQQEIRDLALSIPNLPDDSVPVGRDENDNQEICRWGEPRSYNFDVRDHVTLGEMAEGLDFAAAVKLTGARFVVMKGQIARMHRALAQFMLDLHTEQHGYLETYVPYLVNHDTLYGTGQLPKFGADLFHTRPLEEEADSSIYALIPTAEVPVTNLVRGEILEESALPLKMTAHTPCFRSEAGSYGRDTRGLIRMHQFDKVELVQIVRPEDSMAALEELTAHAEKVLQLLNLPYRKVLLCTGDMGFGSSKTYDLEVWVPAQNTYREISSCSNMWDFQARRMQARYRSKDDKKPRLVHTLNGSGLAVGRTLVAVMENYQQADGRIQVPEALRPYMNGLEYIG.

Positions 44–65 (TESLQAERNSRSKSIGAAKARG) are disordered. 237–239 (TAE) contacts L-serine. ATP is bound at residue 268–270 (RSE). Glutamate 291 contacts L-serine. Residue 355 to 358 (EISS) coordinates ATP. Serine 391 lines the L-serine pocket.

This sequence belongs to the class-II aminoacyl-tRNA synthetase family. Type-1 seryl-tRNA synthetase subfamily. In terms of assembly, homodimer. The tRNA molecule binds across the dimer.

It is found in the cytoplasm. It catalyses the reaction tRNA(Ser) + L-serine + ATP = L-seryl-tRNA(Ser) + AMP + diphosphate + H(+). The enzyme catalyses tRNA(Sec) + L-serine + ATP = L-seryl-tRNA(Sec) + AMP + diphosphate + H(+). It participates in aminoacyl-tRNA biosynthesis; selenocysteinyl-tRNA(Sec) biosynthesis; L-seryl-tRNA(Sec) from L-serine and tRNA(Sec): step 1/1. Functionally, catalyzes the attachment of serine to tRNA(Ser). Is also able to aminoacylate tRNA(Sec) with serine, to form the misacylated tRNA L-seryl-tRNA(Sec), which will be further converted into selenocysteinyl-tRNA(Sec). The sequence is that of Serine--tRNA ligase from Edwardsiella ictaluri (strain 93-146).